The chain runs to 354 residues: Uroporphyrinogen decarboxylase (354 aa).

Residues 27–31 (RQAGR), Phe46, Asp77, Tyr154, Thr209, and His327 each bind substrate.

The protein belongs to the uroporphyrinogen decarboxylase family. In terms of assembly, homodimer.

It localises to the cytoplasm. It carries out the reaction uroporphyrinogen III + 4 H(+) = coproporphyrinogen III + 4 CO2. It functions in the pathway porphyrin-containing compound metabolism; protoporphyrin-IX biosynthesis; coproporphyrinogen-III from 5-aminolevulinate: step 4/4. In terms of biological role, catalyzes the decarboxylation of four acetate groups of uroporphyrinogen-III to yield coproporphyrinogen-III. The protein is Uroporphyrinogen decarboxylase of Salmonella typhi.